The chain runs to 860 residues: Probable beta-glucosidase A (860 aa).

An N-terminal signal peptide occupies residues M1–A19. N61, N211, and N252 each carry an N-linked (GlcNAc...) asparagine glycan. D280 is an active-site residue. Residues N315, N322, N354, N387, N442, N523, N542, N564, N658, N690, and N712 are each glycosylated (N-linked (GlcNAc...) asparagine).

The protein belongs to the glycosyl hydrolase 3 family.

Its subcellular location is the secreted. It carries out the reaction Hydrolysis of terminal, non-reducing beta-D-glucosyl residues with release of beta-D-glucose.. It functions in the pathway glycan metabolism; cellulose degradation. In terms of biological role, beta-glucosidases are one of a number of cellulolytic enzymes involved in the degradation of cellulosic biomass. Catalyzes the last step releasing glucose from the inhibitory cellobiose. This is Probable beta-glucosidase A (bglA) from Aspergillus niger (strain ATCC MYA-4892 / CBS 513.88 / FGSC A1513).